The primary structure comprises 473 residues: Fumarate hydratase class II (473 aa).

Substrate contacts are provided by residues 105-107, 130-133, 140-142, and threonine 188; these read SGT, HPND, and SSN. The Proton donor/acceptor role is filled by histidine 189. Serine 319 is an active-site residue. Substrate contacts are provided by residues serine 320 and 325 to 327; that span reads KVN.

It belongs to the class-II fumarase/aspartase family. Fumarase subfamily. In terms of assembly, homotetramer.

It is found in the cytoplasm. It carries out the reaction (S)-malate = fumarate + H2O. It functions in the pathway carbohydrate metabolism; tricarboxylic acid cycle; (S)-malate from fumarate: step 1/1. Involved in the TCA cycle. Catalyzes the stereospecific interconversion of fumarate to L-malate. The chain is Fumarate hydratase class II from Xylella fastidiosa (strain Temecula1 / ATCC 700964).